The primary structure comprises 745 residues: Copper-transporting ATPase (745 aa).

In terms of domain architecture, HMA spans 1–67 (MKESFYIEGM…LIEKLGYSPK (67 aa)). Over 1–83 (MKESFYIEGM…KKEFFSPNVK (83 aa)) the chain is Cytoplasmic. Cu cation-binding residues include C12 and C15. A helical membrane pass occupies residues 84–104 (LALAVIFTLFVVYLSMGAMLS). The Extracellular portion of the chain corresponds to 105-124 (PSLLPESLLAIDNHSNFLNA). Residues 125–144 (CLQLIGALIVMHLGRDFYIQ) form a helical membrane-spanning segment. The Cytoplasmic portion of the chain corresponds to 145-151 (GFKALWH). Residues 152 to 172 (RQPNMSSLIAIGTSAALISSL) form a helical membrane-spanning segment. The Extracellular segment spans residues 173-194 (WQLYLVYTNHYTDQWSYGHYYF). Residues 195–215 (ESVCVILMFVMVGKRIENVSK) traverse the membrane as a helical segment. Over 216–343 (DKALDAMQAL…KAEISRLADK (128 aa)) the chain is Cytoplasmic. Residues 344-366 (VSSVFVPSVIAISILAFVVWLII) traverse the membrane as a helical segment. Over 367–379 (APKPDFWWNFGIA) the chain is Extracellular. A helical membrane pass occupies residues 380 to 397 (LEVFVSVLVISCPCALGL). Over 398–685 (ATPMSILVAN…KLSQATIKNI (288 aa)) the chain is Cytoplasmic. D435 serves as the catalytic 4-aspartylphosphate intermediate. D631 and D635 together coordinate Mg(2+). Residues 686–705 (KENLFWAFCYNSVFIPLACG) traverse the membrane as a helical segment. Residues 706 to 716 (VLYKANLMLSP) are Extracellular-facing. Residues 717–735 (AIAGLAMSLSSVSVVLNSQ) traverse the membrane as a helical segment. Residues 736 to 745 (RLRNFKIKDH) lie on the Cytoplasmic side of the membrane.

It belongs to the cation transport ATPase (P-type) (TC 3.A.3) family. Type IB subfamily.

Its subcellular location is the cell membrane. It carries out the reaction Cu(2+)(in) + ATP + H2O = Cu(2+)(out) + ADP + phosphate + H(+). Its function is as follows. Probably involved in copper export. The chain is Copper-transporting ATPase (copA) from Helicobacter pylori (strain ATCC 700392 / 26695) (Campylobacter pylori).